Here is a 449-residue protein sequence, read N- to C-terminus: Kynurenine 3-monooxygenase (449 aa).

The protein belongs to the aromatic-ring hydroxylase family. KMO subfamily. FAD serves as cofactor.

The catalysed reaction is L-kynurenine + NADPH + O2 + H(+) = 3-hydroxy-L-kynurenine + NADP(+) + H2O. It participates in cofactor biosynthesis; NAD(+) biosynthesis; quinolinate from L-kynurenine: step 1/3. Its function is as follows. Catalyzes the hydroxylation of L-kynurenine (L-Kyn) to form 3-hydroxy-L-kynurenine (L-3OHKyn). Required for synthesis of quinolinic acid. The polypeptide is Kynurenine 3-monooxygenase (Legionella pneumophila (strain Corby)).